The primary structure comprises 189 residues: UPF0149 protein VFMJ11_2207 (189 aa).

It belongs to the UPF0149 family.

This chain is UPF0149 protein VFMJ11_2207, found in Aliivibrio fischeri (strain MJ11) (Vibrio fischeri).